The sequence spans 152 residues: Sec-independent protein translocase protein TatB (152 aa).

The helical transmembrane segment at 1–21 (MFGISFSELLLVGLVALLVLG) threads the bilayer. Over residues 98 to 115 (HAPGAATVAEAPPASEVP) the composition is skewed to low complexity. Positions 98–152 (HAPGAATVAEAPPASEVPAPLPSTPAPAPTAEPAAPVATPATTAPHDSTLPPRAP) are disordered. Positions 116-127 (APLPSTPAPAPT) are enriched in pro residues. A compositionally biased stretch (low complexity) spans 128–142 (AEPAAPVATPATTAP).

The protein belongs to the TatB family. In terms of assembly, the Tat system comprises two distinct complexes: a TatABC complex, containing multiple copies of TatA, TatB and TatC subunits, and a separate TatA complex, containing only TatA subunits. Substrates initially bind to the TatABC complex, which probably triggers association of the separate TatA complex to form the active translocon.

Its subcellular location is the cell inner membrane. Its function is as follows. Part of the twin-arginine translocation (Tat) system that transports large folded proteins containing a characteristic twin-arginine motif in their signal peptide across membranes. Together with TatC, TatB is part of a receptor directly interacting with Tat signal peptides. TatB may form an oligomeric binding site that transiently accommodates folded Tat precursor proteins before their translocation. The protein is Sec-independent protein translocase protein TatB of Pseudomonas fluorescens (strain ATCC BAA-477 / NRRL B-23932 / Pf-5).